A 477-amino-acid chain; its full sequence is Bifunctional protein HldE (477 aa).

The interval 1–318 (MKVTLSEFER…ENAVRGRADT (318 aa)) is ribokinase. At Lys-179 the chain carries N6-acetyllysine. 195-198 (NLSE) serves as a coordination point for ATP. Residue Asp-264 is part of the active site. The segment at 344 to 477 (MTNGVFDILH…IKKIQQDKKG (134 aa)) is cytidylyltransferase.

It in the N-terminal section; belongs to the carbohydrate kinase PfkB family. This sequence in the C-terminal section; belongs to the cytidylyltransferase family. Homodimer.

It catalyses the reaction D-glycero-beta-D-manno-heptose 7-phosphate + ATP = D-glycero-beta-D-manno-heptose 1,7-bisphosphate + ADP + H(+). The enzyme catalyses D-glycero-beta-D-manno-heptose 1-phosphate + ATP + H(+) = ADP-D-glycero-beta-D-manno-heptose + diphosphate. It functions in the pathway nucleotide-sugar biosynthesis; ADP-L-glycero-beta-D-manno-heptose biosynthesis; ADP-L-glycero-beta-D-manno-heptose from D-glycero-beta-D-manno-heptose 7-phosphate: step 1/4. It participates in nucleotide-sugar biosynthesis; ADP-L-glycero-beta-D-manno-heptose biosynthesis; ADP-L-glycero-beta-D-manno-heptose from D-glycero-beta-D-manno-heptose 7-phosphate: step 3/4. Functionally, catalyzes the phosphorylation of D-glycero-D-manno-heptose 7-phosphate at the C-1 position to selectively form D-glycero-beta-D-manno-heptose-1,7-bisphosphate. Its function is as follows. Catalyzes the ADP transfer from ATP to D-glycero-beta-D-manno-heptose 1-phosphate, yielding ADP-D-glycero-beta-D-manno-heptose. In Shigella boydii serotype 18 (strain CDC 3083-94 / BS512), this protein is Bifunctional protein HldE.